A 382-amino-acid polypeptide reads, in one-letter code: Galactokinase (382 aa).

34 to 37 (EHTD) contacts substrate. 124–130 (GAGLSSS) is a binding site for ATP. Mg(2+) is bound by residues S130 and E162. D174 serves as the catalytic Proton acceptor. A substrate-binding site is contributed by Y223.

It belongs to the GHMP kinase family. GalK subfamily.

It localises to the cytoplasm. The enzyme catalyses alpha-D-galactose + ATP = alpha-D-galactose 1-phosphate + ADP + H(+). It functions in the pathway carbohydrate metabolism; galactose metabolism. In terms of biological role, catalyzes the transfer of the gamma-phosphate of ATP to D-galactose to form alpha-D-galactose-1-phosphate (Gal-1-P). This is Galactokinase from Shigella dysenteriae serotype 1 (strain Sd197).